Here is a 550-residue protein sequence, read N- to C-terminus: MNVNYIFVTGGVVSSLGKGIVTASLASVLEARGLDVTIIKLDPYINVDPGTMSPIQHGEVFITEDGAETDLDLGHYERFIKTKMTRYNNCTTGRIYSNVLKRERRGDYLGSTVQIIPHVTSFIKQWLITHSKSYDVLLVEVGGTVGDIESLPFLEAIRQMAIDVNRYHTLYIHLTLVPFISMTGELKTKPTQHSVKELLSIGIQPDILICRSDHLIGDSERKKISLFCNVSKKAVISLQNVNSIYKIPLMLQDQGLDEYICKYFNLNCPKADLSDWKQVVYYQNNPKGTVTIGIVGKYIRLTDAYKSVIEALQHAGLKNRFFVKICFIDAQDLETLSVKKMLKGLDGILVPGGFGYRGVEGKILSAQYARENNIPYFGICLGMQVALIEFARHVVGMEDANSTEFVNNCKYPVISEITGYQCTNNNNDIIQYHDNVDFSRSTMRLGSQVCHLIEGSLTQQMYGKKIIYERFRHRYEINISLFKEIEYAGLSGVGYSKNNNFIEIIECKNHPWFIGSQFHPEFNSTPRDGHPLFVGFINAAIQYQCKIIGS.

Residues 1–266 (MNVNYIFVTG…DEYICKYFNL (266 aa)) form an amidoligase domain region. Residue serine 14 coordinates CTP. Serine 14 provides a ligand contact to UTP. ATP contacts are provided by residues 15 to 20 (SLGKGI) and aspartate 72. Mg(2+) is bound by residues aspartate 72 and glutamate 140. CTP is bound by residues 147 to 149 (DIE), 187 to 192 (KTKPTQ), and lysine 223. Residues 187–192 (KTKPTQ) and lysine 223 contribute to the UTP site. Positions 291–546 (TIGIVGKYIR…INAAIQYQCK (256 aa)) constitute a Glutamine amidotransferase type-1 domain. An L-glutamine-binding site is contributed by glycine 353. The active-site Nucleophile; for glutamine hydrolysis is the cysteine 380. L-glutamine is bound by residues 381 to 384 (LGMQ), glutamate 404, and arginine 474. Active-site residues include histidine 519 and glutamate 521.

Belongs to the CTP synthase family. Homotetramer.

It catalyses the reaction UTP + L-glutamine + ATP + H2O = CTP + L-glutamate + ADP + phosphate + 2 H(+). The catalysed reaction is L-glutamine + H2O = L-glutamate + NH4(+). The enzyme catalyses UTP + NH4(+) + ATP = CTP + ADP + phosphate + 2 H(+). The protein operates within pyrimidine metabolism; CTP biosynthesis via de novo pathway; CTP from UDP: step 2/2. With respect to regulation, allosterically activated by GTP, when glutamine is the substrate; GTP has no effect on the reaction when ammonia is the substrate. The allosteric effector GTP functions by stabilizing the protein conformation that binds the tetrahedral intermediate(s) formed during glutamine hydrolysis. Inhibited by the product CTP, via allosteric rather than competitive inhibition. Its function is as follows. Catalyzes the ATP-dependent amination of UTP to CTP with either L-glutamine or ammonia as the source of nitrogen. Regulates intracellular CTP levels through interactions with the four ribonucleotide triphosphates. This Blochmanniella floridana protein is CTP synthase.